Reading from the N-terminus, the 907-residue chain is Protein translocase subunit SecA (907 aa).

ATP is bound by residues Gln-87, 105 to 109, and Asp-512; that span reads GEGKT. 4 residues coordinate Zn(2+): Cys-891, Cys-893, Cys-902, and His-903.

This sequence belongs to the SecA family. Monomer and homodimer. Part of the essential Sec protein translocation apparatus which comprises SecA, SecYEG and auxiliary proteins SecDF-YajC and YidC. Zn(2+) is required as a cofactor.

It localises to the cell inner membrane. The protein localises to the cytoplasm. The enzyme catalyses ATP + H2O + cellular proteinSide 1 = ADP + phosphate + cellular proteinSide 2.. Its function is as follows. Part of the Sec protein translocase complex. Interacts with the SecYEG preprotein conducting channel. Has a central role in coupling the hydrolysis of ATP to the transfer of proteins into and across the cell membrane, serving both as a receptor for the preprotein-SecB complex and as an ATP-driven molecular motor driving the stepwise translocation of polypeptide chains across the membrane. The chain is Protein translocase subunit SecA from Shewanella loihica (strain ATCC BAA-1088 / PV-4).